We begin with the raw amino-acid sequence, 214 residues long: MSSAVLADHVERQLDELGWETSHIVGNSLGGWVAFELERRGRARSVTGIAPAGGWTRWSPVKFEVIAKFIAGAPILAVAHILGQRALRLPFSRLLATLPISATPDGVSERELSGIIDDAAHCPAYFQLLVKALVLPGLQELEHTAVPSHVVLCEQDRVVPPSRFSRHFTDSLPAGHRLTVLDGVGHVPMFEAPGRITELITSFIEECCPHVRAS.

The active-site Nucleophile is S28. Catalysis depends on charge relay system residues D156 and H186.

The protein belongs to the AB hydrolase superfamily.

It carries out the reaction an epoxide + H2O = an ethanediol. Inhibited by AUDA, a known epoxide hydrolase inhibitor. Functionally, catalyzes the hydrolysis of epoxide-containing substrates. In vitro, catalyzes the hydrolysis of the synthetic compounds PHOME and styrene oxide. Plays an essential role in subverting phagosomal acidification. Plays a major role in the survival of M.tuberculosis (Mtb) during in vitro acidic stress and protects Mtb in response to phagosomal acidification inside macrophages. Also supports Mtb growth under the nutrient-deprived condition at pH 7.0. The protein is Epoxide hydrolase EphH of Mycobacterium tuberculosis (strain ATCC 25618 / H37Rv).